Consider the following 212-residue polypeptide: Redox-sensing transcriptional repressor Rex (212 aa).

Residues 17-56 constitute a DNA-binding region (H-T-H motif); that stretch reads LYARSLRYLLEEGVHSVSSQELGERINVTAAQIRKDLSYF. 91 to 96 contacts NAD(+); that stretch reads GIGLLG.

This sequence belongs to the transcriptional regulatory Rex family. Homodimer.

The protein localises to the cytoplasm. Its function is as follows. Modulates transcription in response to changes in cellular NADH/NAD(+) redox state. The protein is Redox-sensing transcriptional repressor Rex of Chloroflexus aurantiacus (strain ATCC 29366 / DSM 635 / J-10-fl).